A 468-amino-acid chain; its full sequence is UDP-N-acetylmuramate--L-alanine ligase (468 aa).

Residue G121–T127 participates in ATP binding.

Belongs to the MurCDEF family.

It is found in the cytoplasm. The catalysed reaction is UDP-N-acetyl-alpha-D-muramate + L-alanine + ATP = UDP-N-acetyl-alpha-D-muramoyl-L-alanine + ADP + phosphate + H(+). It participates in cell wall biogenesis; peptidoglycan biosynthesis. In terms of biological role, cell wall formation. In Borreliella afzelii (strain PKo) (Borrelia afzelii), this protein is UDP-N-acetylmuramate--L-alanine ligase.